Reading from the N-terminus, the 175-residue chain is Auxin-responsive protein IAA28 (175 aa).

The segment at 1 to 39 is disordered; it reads MEEEKRLELRLAPPCHQFTSNNNINGSKQKSSTKETSFL. The short motif at 7 to 11 is the EAR-like (transcriptional repression) element; the sequence is LELRL. Polar residues predominate over residues 17 to 39; that stretch reads QFTSNNNINGSKQKSSTKETSFL. Residues 80 to 161 enclose the PB1 domain; it reads ELYVKINMEG…TVKRLHVLKT (82 aa).

The protein belongs to the Aux/IAA family. As to quaternary structure, homodimers and heterodimers. Interacts with TPL. As to expression, in roots and inflorescence stems.

It localises to the nucleus. Its function is as follows. Aux/IAA proteins are short-lived transcriptional factors that function as repressors of early auxin response genes at low auxin concentrations. Repression is thought to result from the interaction with auxin response factors (ARFs), proteins that bind to the auxin-responsive promoter element (AuxRE). Formation of heterodimers with ARF proteins may alter their ability to modulate early auxin response genes expression. In Arabidopsis thaliana (Mouse-ear cress), this protein is Auxin-responsive protein IAA28 (IAA28).